Here is a 132-residue protein sequence, read N- to C-terminus: Agouti-signaling protein (132 aa).

An N-terminal signal peptide occupies residues 1–22; it reads MDVTRLVLATLLVFLCFFAAYS. Residue N39 is glycosylated (N-linked (GlcNAc...) asparagine). Positions 60-93 are disordered; it reads KKISRKEAEKRRSSKKEASKQKVARPRTPLSVPC. The span at 64 to 79 shows a compositional bias: basic and acidic residues; sequence RKEAEKRRSSKKEASK. 5 cysteine pairs are disulfide-bonded: C93-C108, C100-C114, C107-C125, C111-C132, and C116-C123. One can recognise an Agouti domain in the interval 93–132; it reads CVSTRGSCKPPAPACCHPCASCQCRFFRSACSCRVLNVNC.

It is found in the secreted. Involved in the regulation of melanogenesis. The binding of ASP to MC1R precludes alpha-MSH initiated signaling and thus blocks production of cAMP, leading to a down-regulation of eumelanogenesis (brown/black pigment) and thus increasing synthesis of pheomelanin (yellow/red pigment). This Cebuella pygmaea (Pygmy marmoset) protein is Agouti-signaling protein (ASIP).